The chain runs to 166 residues: Interferon gamma-related (166 aa).

An N-terminal signal peptide occupies residues 1–26 (MYCRLNMVYLICALLLIVSLQGTVGA). N-linked (GlcNAc...) asparagine glycosylation is present at N91.

It belongs to the type II (or gamma) interferon family. As to quaternary structure, homodimer. As to expression, strongly expressed in spleen. Also detected at lower levels in gill, kidney, heart, brain and intestine. In immune cell populations, expressed at highest levels in peripheral blood leukocytes and at lower levels in splenocytes, granulocytes, monocytes and macrophages.

The protein resides in the secreted. Cytokine which binds to interferon gamma receptor 1 (ifngr1). Has activating effects on primary macrophages. Induces nitric oxide production and phagocytic responses in macrophages. Primes monocytes for production of reactive oxygen intermediates (ROI), although the effect is short-lived. Also has inhibitory effects on monocyte priming by ifng1 (interferon gamma 1) and tnfb (TNF-alpha 2). Stimulates phosphorylation of the JAK/STAT signal transducer stat1, but fails to induce stat1 nuclear localization. Promotes increased expression of a number of genes important for macrophage activity, including the interferon regulatory factors irf2 and irf9. The chain is Interferon gamma-related from Carassius auratus (Goldfish).